The following is a 599-amino-acid chain: Probable acetolactate synthase large subunit (599 aa).

Glu47 contributes to the thiamine diphosphate binding site. FAD contacts are provided by residues Arg149, 258 to 279 (HGTK…IGCR), and 301 to 320 (DIDP…IVGD). Positions 404 to 484 (QNQMWMAHYF…VVICIFDNRT (81 aa)) are thiamine pyrophosphate binding. Residues Asp455 and Asn482 each contribute to the Mg(2+) site.

Belongs to the TPP enzyme family. As to quaternary structure, dimer of large and small chains. Mg(2+) serves as cofactor. The cofactor is thiamine diphosphate.

It carries out the reaction 2 pyruvate + H(+) = (2S)-2-acetolactate + CO2. It participates in amino-acid biosynthesis; L-isoleucine biosynthesis; L-isoleucine from 2-oxobutanoate: step 1/4. Its pathway is amino-acid biosynthesis; L-valine biosynthesis; L-valine from pyruvate: step 1/4. The polypeptide is Probable acetolactate synthase large subunit (ilvB) (Methanococcus aeolicus).